The sequence spans 275 residues: Putative pyruvate, phosphate dikinase regulatory protein (275 aa).

Residue 151–158 (GVSRTSKT) participates in ADP binding.

This sequence belongs to the pyruvate, phosphate/water dikinase regulatory protein family. PDRP subfamily.

It catalyses the reaction N(tele)-phospho-L-histidyl/L-threonyl-[pyruvate, phosphate dikinase] + ADP = N(tele)-phospho-L-histidyl/O-phospho-L-threonyl-[pyruvate, phosphate dikinase] + AMP + H(+). The catalysed reaction is N(tele)-phospho-L-histidyl/O-phospho-L-threonyl-[pyruvate, phosphate dikinase] + phosphate + H(+) = N(tele)-phospho-L-histidyl/L-threonyl-[pyruvate, phosphate dikinase] + diphosphate. Bifunctional serine/threonine kinase and phosphorylase involved in the regulation of the pyruvate, phosphate dikinase (PPDK) by catalyzing its phosphorylation/dephosphorylation. The polypeptide is Putative pyruvate, phosphate dikinase regulatory protein (Rhodospirillum rubrum (strain ATCC 11170 / ATH 1.1.1 / DSM 467 / LMG 4362 / NCIMB 8255 / S1)).